The sequence spans 494 residues: Guanosine-5'-triphosphate,3'-diphosphate pyrophosphatase (494 aa).

Belongs to the GppA/Ppx family. GppA subfamily.

The catalysed reaction is guanosine 3'-diphosphate 5'-triphosphate + H2O = guanosine 3',5'-bis(diphosphate) + phosphate + H(+). It functions in the pathway purine metabolism; ppGpp biosynthesis; ppGpp from GTP: step 2/2. Functionally, catalyzes the conversion of pppGpp to ppGpp. Guanosine pentaphosphate (pppGpp) is a cytoplasmic signaling molecule which together with ppGpp controls the 'stringent response', an adaptive process that allows bacteria to respond to amino acid starvation, resulting in the coordinated regulation of numerous cellular activities. This Shigella flexneri protein is Guanosine-5'-triphosphate,3'-diphosphate pyrophosphatase.